A 210-amino-acid polypeptide reads, in one-letter code: Chloramphenicol acetyltransferase (210 aa).

Residue histidine 79 is part of the active site.

The protein belongs to the transferase hexapeptide repeat family.

It catalyses the reaction chloramphenicol + acetyl-CoA = chloramphenicol 3-acetate + CoA. This enzyme is an effector of chloramphenicol resistance in bacteria. In Klebsiella aerogenes (Enterobacter aerogenes), this protein is Chloramphenicol acetyltransferase (catB4).